We begin with the raw amino-acid sequence, 59 residues long: Crassipeptide cce9a (59 aa).

Residues 1 to 30 constitute a propeptide that is removed on maturation; it reads ADNHARVAGPRAVASGRYATEKAFLQMMTR.

Post-translationally, contains 3 disulfide bonds. Expressed by the venom duct.

It localises to the secreted. In terms of biological role, crassispirid snail peptide that induces sleep-like symptoms in young mice (12 and 14 days) and hyperactivity in older mice (16 days), when intracranially injected. This is Crassipeptide cce9a from Crassispira cerithina (Sea snail).